Here is a 311-residue protein sequence, read N- to C-terminus: Olfactory receptor 1L4 (311 aa).

Residues Met1 to Lys26 lie on the Extracellular side of the membrane. The N-linked (GlcNAc...) asparagine glycan is linked to Asn5. Residues Pro27 to Ile50 form a helical membrane-spanning segment. Over Tyr51–Thr58 the chain is Cytoplasmic. The helical transmembrane segment at Pro59–Pro80 threads the bilayer. Over Lys81–Gln101 the chain is Extracellular. An intrachain disulfide couples Cys98 to Cys190. The helical transmembrane segment at Met102–Ile121 threads the bilayer. The Cytoplasmic segment spans residues Asp122–Trp140. The helical transmembrane segment at His141–Phe159 threads the bilayer. At Arg160–Gln197 the chain is on the extracellular side. Residues Met198–Leu220 traverse the membrane as a helical segment. Residues Gln221 to Lys237 lie on the Cytoplasmic side of the membrane. The helical transmembrane segment at Ala238–Tyr260 threads the bilayer. Residues Phe261–Arg273 lie on the Extracellular side of the membrane. The chain crosses the membrane as a helical span at residues Val274–Leu293. Topologically, residues Arg294–Ser311 are cytoplasmic.

Belongs to the G-protein coupled receptor 1 family.

It localises to the cell membrane. Its function is as follows. Odorant receptor. In Homo sapiens (Human), this protein is Olfactory receptor 1L4 (OR1L4).